The sequence spans 197 residues: MEQESLNGRYGSRVMTDEQMETLRKQIAIYAVLCDQLVFLHNSLSSVPLLSSGMNPMRGEYFDPMVASSSAHGMSTRPRWTPTTTQLQILENIYKEGSGTPNPRRIKEITMELSEHGQIMEKNVYHWFQNRRARSKRKQPPTTTITSSQADDAAVTTTEERGRCGDDSGGFESYEHILFPSPDLGIEHLLNRDKFID.

A DNA-binding region (homeobox; WUS-type) is located at residues 75–139 (STRPRWTPTT…NRRARSKRKQ (65 aa)). Residues 132–168 (RARSKRKQPPTTTITSSQADDAAVTTTEERGRCGDDS) are disordered. The segment covering 140–150 (PPTTTITSSQA) has biased composition (polar residues).

The protein belongs to the WUS homeobox family.

The protein resides in the nucleus. Functionally, potential transcription factor that plays a central role during developmental processes. This chain is Putative WUSCHEL-related homeobox 10 (WOX10), found in Arabidopsis thaliana (Mouse-ear cress).